The following is a 156-amino-acid chain: Transcription antitermination protein NusB (156 aa).

It belongs to the NusB family.

Its function is as follows. Involved in transcription antitermination. Required for transcription of ribosomal RNA (rRNA) genes. Binds specifically to the boxA antiterminator sequence of the ribosomal RNA (rrn) operons. The chain is Transcription antitermination protein NusB from Rickettsia africae (strain ESF-5).